Here is a 126-residue protein sequence, read N- to C-terminus: Protein ApaG (126 aa).

Positions 2–126 (SALDTSIRVE…FRLTTPGLLH (125 aa)) constitute an ApaG domain.

This is Protein ApaG from Shewanella baltica (strain OS195).